A 445-amino-acid chain; its full sequence is UPF0210 protein SEQ_0468 (445 aa).

This sequence belongs to the UPF0210 family. Homodimer.

The protein is UPF0210 protein SEQ_0468 of Streptococcus equi subsp. equi (strain 4047).